Here is a 314-residue protein sequence, read N- to C-terminus: Lipoyl synthase (314 aa).

The [4Fe-4S] cluster site is built by Cys67, Cys72, Cys78, Cys93, Cys97, Cys100, and Ser306. Residues 79 to 295 form the Radical SAM core domain; sequence FNRGTATFMI…KNYALSIGFK (217 aa).

Belongs to the radical SAM superfamily. Lipoyl synthase family. Requires [4Fe-4S] cluster as cofactor.

Its subcellular location is the cytoplasm. It carries out the reaction [[Fe-S] cluster scaffold protein carrying a second [4Fe-4S](2+) cluster] + N(6)-octanoyl-L-lysyl-[protein] + 2 oxidized [2Fe-2S]-[ferredoxin] + 2 S-adenosyl-L-methionine + 4 H(+) = [[Fe-S] cluster scaffold protein] + N(6)-[(R)-dihydrolipoyl]-L-lysyl-[protein] + 4 Fe(3+) + 2 hydrogen sulfide + 2 5'-deoxyadenosine + 2 L-methionine + 2 reduced [2Fe-2S]-[ferredoxin]. The protein operates within protein modification; protein lipoylation via endogenous pathway; protein N(6)-(lipoyl)lysine from octanoyl-[acyl-carrier-protein]: step 2/2. Functionally, catalyzes the radical-mediated insertion of two sulfur atoms into the C-6 and C-8 positions of the octanoyl moiety bound to the lipoyl domains of lipoate-dependent enzymes, thereby converting the octanoylated domains into lipoylated derivatives. The sequence is that of Lipoyl synthase from Buchnera aphidicola subsp. Baizongia pistaciae (strain Bp).